We begin with the raw amino-acid sequence, 578 residues long: MRVAVIGGGPGGLTTLKHLLEAHKFVGGDPVEAKLFEAEEGIGGTFLKRMYEDAELVSSKYLTAFSDFRAREDDPDYLPAARYLEYLGEYATAFDLWPYIQLSTTVTAVRRKGRSHVISYATQDGKEGSWLCDAVAVCSGLHVTPNIPSIKGIDKVPKSFHSSGFKSREQFGSDTTVVVLGTGETAMDIAHLAVTAPTKRVVICHRDGFSVVAKRTPSPVVFPSLASQLQSPNPPVPVDTYLHASHKWGNLPGNVFDSLVKQGMWLMTGTSAGYDQWVGGYPSPRWHTSNVIFTKSSKAMPYISKPYRKDTILQRLRSSIVQVPIPETHGRHIDIAPWPSHIDSEGVLHFIDNGRPEYKRMEEAEVVRPDVLVFGTGYTQRFDFLDSTYPSTSDLDVRDVWRRDEPSVGFIGFVRPGFGAIPPLAELQAQLWVLNLLAPERLQPLLPQDEPHYRLGMPSDARIKYGVSHDDYANQLAVDMNASPSFMDAVRIGSSRKEWWRLPLVWLLAAEFNTKFRLCGPWKWDGAVDVMSGELWDVVKRRGGLLKQIVLSGVPLVVFGSLHLVLWIFTSLFKPSRW.

A helical transmembrane segment spans residues 549–569 (IVLSGVPLVVFGSLHLVLWIF).

It belongs to the FMO family. FAD serves as cofactor.

It localises to the membrane. It participates in secondary metabolite biosynthesis; flavonoid biosynthesis. In terms of biological role, monooxygenase; part of the gene cluster that mediates the biosynthesis of chlorflavonin, a fungal flavonoid with acetolactate synthase inhibitory activity. Within the pathway, cfoE is responsible for the chlorination of the flavonoid skeleton at position C3'. The pathway begins with the PKS-NRPS hybrid synthetase cfoA that uses benzoic acid or p-hydroxybenzoic acid as a starter unit with four rounds of chain elongation using malonyl-CoA to form the chalcone skeleton. Then, a new type of chalcone isomerase, cfoK, catalyzes the conversion of the chalcone into a flavanone by a histidine-mediated oxa-Michael addition mechanism. The desaturation of flavanone to flavone is catalyzed by a new type of flavone synthase, the flavin mononucleotide (FMN)-dependent oxidoreductase cfoJ. Monooxygenases cfoF, cfoG, and P450 cfoH are responsible for the hydroxylation of the flavonoid skeleton at sites C3, C8, and C2', respectively. Like cfoF, the dehydratase cfoI plays also a role in the hydroxylation of position C3. Methyltransferases cfoB, cfoC, and cfoD then catalyze the methylation of C7-OH, C8-OH, and C3-OH, respectively. Finally, the monooxygenase cfoE is responsible for the chlorination of flavonoid at position C3'. This is Monooxygenase cfoE from Aspergillus candidus.